A 590-amino-acid chain; its full sequence is Phosphate-repressible phosphate permease pho-4 (590 aa).

8 consecutive transmembrane segments (helical) span residues 6-26 (FDYL…NIGA), 44-64 (YLQA…GVGA), 85-105 (ALLM…LTMA), 118-138 (IMGG…VQWV), 149-169 (VFLA…IIFL), 186-206 (FVMV…LLLW), 220-240 (IAGT…IFLM), and 246-266 (IVIL…PLLL). Residues 267–466 (RRGEVPPPPA…GALPEKGKAD (200 aa)) are Cytoplasmic-facing. Positions 297–361 (ARRAAQNGDS…PQIKTMVGPR (65 aa)) are disordered. Residues 313–322 (VTSSTSNPSA) show a composition bias toward polar residues. Basic and acidic residues predominate over residues 325-345 (DGEKGATITKDDSSYSHDHSE). Transmembrane regions (helical) follow at residues 467 to 487 (VPVW…WTYG), 506 to 525 (GFSM…RLKL), 527 to 547 (VSTT…SGTW), and 561 to 581 (GWFI…GIII).

The protein belongs to the inorganic phosphate transporter (PiT) (TC 2.A.20) family.

The protein resides in the cell membrane. Phosphate transport activity is competitively inhibited by vanadate and arsenate. Functionally, high-affinity transporter for external inorganic phosphate. Acts probably as a sodium-phosphate symporter. Component of the high affinity phosphate transport system II (ptsII) necessary for scavenging phosphorus from the environment under conditions of limiting phosphorus. This is Phosphate-repressible phosphate permease pho-4 from Neurospora crassa (strain ATCC 24698 / 74-OR23-1A / CBS 708.71 / DSM 1257 / FGSC 987).